The primary structure comprises 523 residues: Cytochrome P450 52-N1 (523 aa).

The helical transmembrane segment at 5 to 25 (AVLGAFAAFLLYMDVLYPFVI) threads the bilayer. Residue C469 coordinates heme.

This sequence belongs to the cytochrome P450 family. The cofactor is heme.

The protein localises to the membrane. The catalysed reaction is an omega-methyl-long-chain fatty acid + reduced [NADPH--hemoprotein reductase] + O2 = an omega-hydroxy-long-chain fatty acid + oxidized [NADPH--hemoprotein reductase] + H2O + H(+). It carries out the reaction (9Z,12Z)-octadecadienoate + reduced [NADPH--hemoprotein reductase] + O2 = 18-hydroxy-(9Z,12Z)-octadecadienoate + oxidized [NADPH--hemoprotein reductase] + H2O + H(+). It catalyses the reaction (9Z)-octadecenoate + reduced [NADPH--hemoprotein reductase] + O2 = 18-hydroxy-(9Z)-octadecenoate + oxidized [NADPH--hemoprotein reductase] + H2O + H(+). The enzyme catalyses hexadecanoate + reduced [NADPH--hemoprotein reductase] + O2 = 16-hydroxyhexadecanoate + oxidized [NADPH--hemoprotein reductase] + H2O + H(+). The catalysed reaction is (9Z)-hexadecenoate + reduced [NADPH--hemoprotein reductase] + O2 = (9Z)-16-hydroxyhexadec-9-enoate + oxidized [NADPH--hemoprotein reductase] + H2O + H(+). It carries out the reaction octadecanoate + reduced [NADPH--hemoprotein reductase] + O2 = 18-hydroxyoctadecanoate + oxidized [NADPH--hemoprotein reductase] + H2O + H(+). Its function is as follows. Catalyzes the terminal (at the omega-position) hydroxylation of a fatty acid. Probably involved in alkane metabolism. Linoleic acid is the preferred substrate, but it acts on various other C-16, C-18 and C-20 saturated and unsaturated fatty acids, namely palmitic, palmitoleic, stearic, oleic, alpha-linoleic, arachidonic and myristic acid. This is Cytochrome P450 52-N1 from Starmerella bombicola (Yeast).